The primary structure comprises 268 residues: Orotidine 5'-phosphate decarboxylase (268 aa).

Residues D38, 60–62, 92–101, Y218, and R236 each bind substrate; these read KTH and DRKFADIGNT. K94 (proton donor) is an active-site residue.

The protein belongs to the OMP decarboxylase family.

It catalyses the reaction orotidine 5'-phosphate + H(+) = UMP + CO2. The protein operates within pyrimidine metabolism; UMP biosynthesis via de novo pathway; UMP from orotate: step 2/2. The sequence is that of Orotidine 5'-phosphate decarboxylase (URA3) from Candida tropicalis (Yeast).